The following is an 81-amino-acid chain: Antitoxin VapB20 (81 aa).

Its function is as follows. Antitoxin component of a type II toxin-antitoxin (TA) system. Neutralizes the toxic effect of cognate toxin VapC20. This is Antitoxin VapB20 (vapB20) from Mycobacterium tuberculosis (strain CDC 1551 / Oshkosh).